We begin with the raw amino-acid sequence, 313 residues long: Olfactory receptor 8B2 (313 aa).

The Extracellular portion of the chain corresponds to 1–25 (MLARNNSLVTEFILAGLTDHPEFRQ). Asn-5 carries an N-linked (GlcNAc...) asparagine glycan. Residues 26 to 46 (PLFFLFLVIYIVTMVGNLGLI) traverse the membrane as a helical segment. Over 47 to 54 (TLFGLNSH) the chain is Cytoplasmic. A helical transmembrane segment spans residues 55–75 (LHTPMYYFLFNLSFIDLCYSS). The Extracellular portion of the chain corresponds to 76 to 99 (VFTPKMLMNFVSKKNIISNVGCMT). Cys-97 and Cys-189 are oxidised to a cystine. A helical membrane pass occupies residues 100 to 120 (RLFFFLFFVISECYMLTSMAY). The Cytoplasmic segment spans residues 121 to 139 (DRYVAICNPLLYKVTMSHQ). Residues 140-160 (VCSMLTFAAYIMGLAGATAHT) form a helical membrane-spanning segment. Over 161-197 (GCMLRLTFCSANIINHYLCDILPLLQLSCTSTYVNEV) the chain is Extracellular. Residues 198–217 (VVLIVVGTNITVPSCTILIS) form a helical membrane-spanning segment. Residues 218-237 (YVFIVTSILHIKSTQGRSKA) are Cytoplasmic-facing. Residues 238 to 258 (FSTCSSHVIALSLFFGSAAFM) form a helical membrane-spanning segment. The Extracellular segment spans residues 259 to 270 (YIKYSSGSMEQG). Residues 271 to 291 (KVSSVFYTNVVPMLNPLIYSL) form a helical membrane-spanning segment. At 292-313 (RNKDVKVALRKALIKIQRRNIF) the chain is on the cytoplasmic side.

This sequence belongs to the G-protein coupled receptor 1 family.

The protein localises to the cell membrane. In terms of biological role, odorant receptor. This chain is Olfactory receptor 8B2 (OR8B2), found in Homo sapiens (Human).